Reading from the N-terminus, the 331-residue chain is UPF0324 membrane protein YdhF (331 aa).

A run of 8 helical transmembrane segments spans residues 2–20 (SILP…SYLL), 24–46 (IFHS…NLYF), 82–104 (LGFS…VLFM), 114–136 (VSAL…VEPV), 148–170 (IAMV…TWMF), 204–226 (TLAT…YFGF), 247–269 (SFLP…IHFV), and 308–330 (LIYG…SLLI).

Belongs to the UPF0324 family.

It is found in the cell membrane. This Lactococcus lactis subsp. lactis (strain IL1403) (Streptococcus lactis) protein is UPF0324 membrane protein YdhF (ydhF).